Consider the following 113-residue polypeptide: ATP-dependent Clp protease adapter protein ClpS (113 aa).

A compositionally biased stretch (pro residues) spans methionine 1–proline 11. Disordered stretches follow at residues methionine 1–glutamate 24 and threonine 92–glutamate 113.

Belongs to the ClpS family. As to quaternary structure, binds to the N-terminal domain of the chaperone ClpA.

In terms of biological role, involved in the modulation of the specificity of the ClpAP-mediated ATP-dependent protein degradation. In Deinococcus radiodurans (strain ATCC 13939 / DSM 20539 / JCM 16871 / CCUG 27074 / LMG 4051 / NBRC 15346 / NCIMB 9279 / VKM B-1422 / R1), this protein is ATP-dependent Clp protease adapter protein ClpS.